Here is a 198-residue protein sequence, read N- to C-terminus: Sorcin (198 aa).

EF-hand domains follow at residues 45–64, 70–98, 100–135, and 151–169; these read QDGQ…SGIA, FNLE…FKEL, AVLN…MGFR, and SGKI…LRAL. Residues aspartate 83, aspartate 85, serine 87, threonine 89, glutamate 94, aspartate 113, aspartate 115, serine 117, threonine 119, and glutamate 124 each coordinate Ca(2+). A Phosphoserine modification is found at serine 178.

Homodimer. Interacts with GCA, RYR2 and ANXA7. As to expression, detected in cardiac myocytes.

It localises to the cytoplasm. It is found in the sarcoplasmic reticulum membrane. In terms of biological role, calcium-binding protein that modulates excitation-contraction coupling in the heart. Contributes to calcium homeostasis in the heart sarcoplasmic reticulum. Modulates the activity of RYR2 calcium channels. This chain is Sorcin (Sri), found in Mus musculus (Mouse).